The sequence spans 96 residues: Putative pterin-4-alpha-carbinolamine dehydratase (96 aa).

This sequence belongs to the pterin-4-alpha-carbinolamine dehydratase family.

It catalyses the reaction (4aS,6R)-4a-hydroxy-L-erythro-5,6,7,8-tetrahydrobiopterin = (6R)-L-erythro-6,7-dihydrobiopterin + H2O. The protein is Putative pterin-4-alpha-carbinolamine dehydratase of Prochlorococcus marinus (strain MIT 9312).